The sequence spans 642 residues: Chaperone protein DnaK (642 aa).

T200 is modified (phosphothreonine; by autocatalysis). Positions 608–618 (QAESQAAGEGQ) are enriched in low complexity. The disordered stretch occupies residues 608 to 642 (QAESQAAGEGQPDAGKKDDGNVVDAEFEEVKKDKQ).

It belongs to the heat shock protein 70 family.

Functionally, acts as a chaperone. The protein is Chaperone protein DnaK of Laribacter hongkongensis (strain HLHK9).